The sequence spans 690 residues: Eukaryotic translation initiation factor 3 subunit B (690 aa).

A compositionally biased stretch (basic and acidic residues) spans Met1–Gly11. Residues Met1–Asp33 form a disordered region. Over residues Asn15–Phe25 the composition is skewed to acidic residues. An RRM domain is found at Ser57–Asp141. WD repeat units follow at residues Thr207–Lys246, Gly292–Leu331, Ile334–Glu369, Glu442–Leu484, and Pro530–Thr575. Residues Glu613–Ile646 adopt a coiled-coil conformation.

The protein belongs to the eIF-3 subunit B family. Component of the eukaryotic translation initiation factor 3 (eIF-3) complex. The eIF-3 complex interacts with pix. Interacts with mxt.

It localises to the cytoplasm. Its function is as follows. RNA-binding component of the eukaryotic translation initiation factor 3 (eIF-3) complex, which is involved in protein synthesis of a specialized repertoire of mRNAs and, together with other initiation factors, stimulates binding of mRNA and methionyl-tRNAi to the 40S ribosome. The eIF-3 complex specifically targets and initiates translation of a subset of mRNAs involved in cell proliferation. This is Eukaryotic translation initiation factor 3 subunit B from Drosophila mojavensis (Fruit fly).